We begin with the raw amino-acid sequence, 456 residues long: Coenzyme F420 hydrogenase subunit alpha (456 aa).

Residues Cys63, Cys66, Cys432, and Cys435 each contribute to the Ni(2+) site.

This sequence belongs to the [NiFe]/[NiFeSe] hydrogenase large subunit family. Pentamer of two alpha chains, two beta chains and a gamma chain. The cofactor is Ni(2+). Iron-sulfur cluster serves as cofactor. Requires FAD as cofactor.

The protein localises to the cell membrane. The catalysed reaction is oxidized coenzyme F420-(gamma-L-Glu)(n) + H2 + H(+) = reduced coenzyme F420-(gamma-L-Glu)(n). In terms of biological role, reduces the physiological low-potential two-electron acceptor coenzyme F420, and the artificial one-electron acceptor methylviologen. This Methanosarcina barkeri (strain Fusaro / DSM 804) protein is Coenzyme F420 hydrogenase subunit alpha (frhA).